The following is a 244-amino-acid chain: Derlin-2.2 (244 aa).

The Cytoplasmic portion of the chain corresponds to 1 to 21; that stretch reads MAQAVEEWYKQMPIITRSYLT. Residues 22–42 traverse the membrane as a helical segment; sequence AAVITTVGCSLDIISPYNLYL. Topologically, residues 43-96 are lumenal; sequence NPTLVVKQYQYWRLVTNFLYFRKMDLDFMFHMFFLARYCKLLEENSFRGKTADF. A helical membrane pass occupies residues 97 to 117; that stretch reads LYMLLFGASVLTGIVLIGGMI. Topologically, residues 118–121 are cytoplasmic; the sequence is PYLS. A helical transmembrane segment spans residues 122-142; that stretch reads ASFAKIIFLSNSLTFMMVYVW. At 143-152 the chain is on the lumenal side; that stretch reads SKQNPYIHMS. The helical transmembrane segment at 153–173 threads the bilayer; the sequence is FLGLFTFTAAYLPWVLLGFSI. Residues 174 to 244 lie on the Cytoplasmic side of the membrane; that stretch reads LVGASAWVDL…AAPFDEIHQD (71 aa).

Belongs to the derlin family.

The protein localises to the endoplasmic reticulum membrane. Its function is as follows. May be involved in the degradation process of specific misfolded endoplasmic reticulum (ER) luminal proteins. The polypeptide is Derlin-2.2 (DER2.2) (Arabidopsis thaliana (Mouse-ear cress)).